We begin with the raw amino-acid sequence, 78 residues long: Large ribosomal subunit protein bL28 (78 aa).

It belongs to the bacterial ribosomal protein bL28 family.

This Pseudomonas aeruginosa (strain LESB58) protein is Large ribosomal subunit protein bL28.